Reading from the N-terminus, the 89-residue chain is MANHYSALKRARQTETRTARNRANTSRMRTQLRALRTAIAGGDAAQVKTEFSGTVSLLDKAVQKGVLHKNTASRYKARLSARVKAKTSK.

Residues 1–28 form a disordered region; that stretch reads MANHYSALKRARQTETRTARNRANTSRM.

This sequence belongs to the bacterial ribosomal protein bS20 family.

Its function is as follows. Binds directly to 16S ribosomal RNA. The protein is Small ribosomal subunit protein bS20 of Koribacter versatilis (strain Ellin345).